The primary structure comprises 211 residues: ATP phosphoribosyltransferase (211 aa).

This sequence belongs to the ATP phosphoribosyltransferase family. Short subfamily. Heteromultimer composed of HisG and HisZ subunits.

The protein localises to the cytoplasm. It catalyses the reaction 1-(5-phospho-beta-D-ribosyl)-ATP + diphosphate = 5-phospho-alpha-D-ribose 1-diphosphate + ATP. It functions in the pathway amino-acid biosynthesis; L-histidine biosynthesis; L-histidine from 5-phospho-alpha-D-ribose 1-diphosphate: step 1/9. Catalyzes the condensation of ATP and 5-phosphoribose 1-diphosphate to form N'-(5'-phosphoribosyl)-ATP (PR-ATP). Has a crucial role in the pathway because the rate of histidine biosynthesis seems to be controlled primarily by regulation of HisG enzymatic activity. This is ATP phosphoribosyltransferase from Pseudomonas savastanoi pv. phaseolicola (strain 1448A / Race 6) (Pseudomonas syringae pv. phaseolicola (strain 1448A / Race 6)).